A 2419-amino-acid polypeptide reads, in one-letter code: MTAPGRSPLEPLLETWEDPSVPPGEQTDAYLTLTSRMTGEEGKEVIAEIEKNLSRLYTVLKAHISSQNSELSSAALQALGFCLYNPRITSGLSEANIQELLLTLNGIIKSSDKNVCTRALWVISKQTFPAELVSKMVSSIIDSLEVILSKGEIHSAVVDFEALNVIIRLIEQAPVQMGEESVRWAKLVIPLVVHSAQKVHLRGATALEMGMPLLLQKQQEIALITEHLMTTKLISELQKLFKNKNETYVLKLWPLFVKLLGKTLHRSGSFINSLLQLEELGFRSGTPMIKKIAFIAWKSLIDNFALNPDILCSAKRLKLLMQPLSSIHVRTETLALTKLEVWWYLLMRLGPQLPANFEQVCVPLIQSTISVDSIPSPQGNSSRGSASPGLSPLTPGHKGASPYGSPRGNLSSNTGGMAAIPSIQLLGLEMMLHFLLGPEVLSFAKQHKIVLSLEPLEHPLISSPSFFSKYAHTLITAVHDSFVSVGKDASDAVVSAIWKELISLVKSVTEAGNRKEKSGSEVLTLLLKSLENIVKSEVFPVSKTLVLMEITVKGLPPKVLGSPAYQVANMDILNGTPALFLIQLIFNNNLLECGVEDEKFFLNLETLVGCVLSGPTSPLAFSDSVLTVINQNAKQLVNKEHLWRMWSMIVSPLTDVIHQTNEVNQGDALEHNFSAIYGALTLPINHIFSAQTFPTGTMKALLKTWSELYRAFTRCASLVATAEENLCCEELSSKIMCSLEDEVLSDLLFLDRISHIIIVMVDCIDFSPYNKKYQPKIKSPQRSSDWSRKKKEPLGKLASLFKLIVKVIDTFHTLSLKETFSDTLLAIGNSIISMLSNVFGHISLPSMIREIFATFTRPLALLYENSKLDEAPKVYTSLNNKLEKLLGEIVACLQFSYLGAYDSELLEHLSPLLCVIFLHKNKQIRKQSALLWNATFAKATALVYPEELKPILRQAKQKILLLLPGLENVEMMDESSEPYSESTENSQLNVKISGMERKSSGKRDSILAHTKDKKKKVKLSAKLKLESSSPKIKSGKLLEEEKSTDFVFIPPEGKETKARVLTEHQKEVLKTKRCDIPALYNNLDASQDTLFSAQFSQEESMESLTLTEKPKEDAKIIKEEQMESTIFIHQDAPENCGIDEHSENASLPNCGGSVAETNPETLITGFDARKEVLISSKILSAESSSSTETSVVSSSSVSNATFSGTPPQPTSRRQTFITLEKFDGSETRPFSPSPLNNISSTVTVRNNQDNTTNTDMPPKARKREVTNSKSDSENLANAGKKSSRRWSKAEQSVTKKSKPSLTSEQEEHSSENNSPDLLSPTEHVSENDDHPSEATLEHKDGDPKPAVENASLEDLTTEEKNVGINMESKESTASVVARTEQIVNEDSQAAALAPNPKTLRRSSRRRSEAVDSCSDSQERESGQQKKERRKEEEKIISKSPLRIKDDKLPTQKLTDESPIQENLTEKGNTLPERTSGEPSVNAEIDQNRRKPDLENVSSEGGGGTLDNLDKSSEKPLRGRTRYQTRRASQGLISAVENSESDSSEAKEEVSRKKRSGKWKNRSSDSVDIEEQEEKKAEEEVMKTANQTLDGQAVPDVDVNAAAQVCEKSTNNNRVILQDSAGPADSLQAPPKGEEKSKINKCVDSSFVSLPVPESNLRTRNASKRLLYKQDNDSNVRVSDSSLSPEKFTQVECQHKRSRRVRRSKSCDCCGEKSQSQEKSFIGLKNTESYAIKSVEKKKTDLQVPETAPETREARDHAETKLAGEEPLVNFHVGLKEENCTTGDSVKSEAELQEASLPPEIVTVKEKTYDTDASEAVSEIQGPCSENHSPAEDPGLSECKDISQKQLSENGELDISDVGKACKVIAGSSPEGVETMELNVRNDAFVAADSEKSTQMDVSVDVATEEDNKKDECEAVTTEVNVEGVATEDFNSGMDLSDTPIPVSKDVETEHAASGEIEGESNESDSGSCEEMNKEMGSHKAQMSTEIDSARVKETDILASASKSEEALIGRLDVNTQSFVSDIEMSSGERTVNCKTETSIELNKLDEAKLSGNEATVGNDTLQEVCFTSEKVEKLPQCLLVQVASELGAESNTTSPEKLELDSFGSVNESPSGMQQARCVWSPLASPSTSILKRGLKRSQEDEISPVNKIRRVSFADPIYQAGLADDIDRRCSVVRSHSSNSSPIIKSVKTSPTSHSKHNTTSAKGFLSPGSQSSKFKSPKKCLITEMAQESMLSPTESVYPALVNCAASVDIILPQITSNMWARGLGQLIRAKNIKTIGDLSTLTASEIKTLPIRSPKVFNVKKALRVYHEQQMKSRGLEEIPIFDISEKAVNGVESRTVSTDEERFASDLIEPVTLDTPLSKNLVAQISALALQLDSEDLYSYTGSQLFEMHEKLGTMANSIIRNLQSRWRSPAHENS.

2 disordered regions span residues 1 to 24 (MTAP…VPPG) and 373 to 408 (SIPS…SPRG). A compositionally biased stretch (polar residues) spans 373-385 (SIPSPQGNSSRGS). Ser-385, Ser-391, Ser-779, Ser-976, and Ser-1005 each carry phosphoserine. Thr-1044 carries the phosphothreonine modification. A compositionally biased stretch (low complexity) spans 1184 to 1198 (SSSTETSVVSSSSVS). 2 disordered regions span residues 1184 to 1594 (SSST…QAVP) and 1613 to 1637 (RVIL…EKSK). Composition is skewed to polar residues over residues 1199-1217 (NATF…QTFI) and 1228-1255 (RPFS…TNTD). Phosphothreonine is present on Thr-1215. Phosphoserine is present on residues Ser-1231 and Ser-1233. Over residues 1263-1272 (REVTNSKSDS) the composition is skewed to basic and acidic residues. A compositionally biased stretch (polar residues) spans 1289–1302 (AEQSVTKKSKPSLT). Over residues 1323–1345 (HVSENDDHPSEATLEHKDGDPKP) the composition is skewed to basic and acidic residues. A phosphoserine mark is found at Ser-1407, Ser-1439, Ser-1457, and Ser-1498. A compositionally biased stretch (basic and acidic residues) spans 1416-1455 (SQERESGQQKKERRKEEEKIISKSPLRIKDDKLPTQKLTD). Over residues 1457 to 1467 (SPIQENLTEKG) the composition is skewed to polar residues. Thr-1504 bears the Phosphothreonine mark. Basic and acidic residues predominate over residues 1507–1516 (NLDKSSEKPL). Residues 1525 to 1537 (RRASQGLISAVEN) show a composition bias toward polar residues. Ser-1528, Ser-1538, Ser-1540, Ser-1542, and Ser-1550 each carry phosphoserine. Residues 1551 to 1560 (RKKRSGKWKN) show a composition bias toward basic residues. Phosphoserine is present on residues Ser-1562 and Ser-1565. Basic and acidic residues predominate over residues 1572–1581 (EEKKAEEEVM). 2 positions are modified to phosphoserine: Ser-1680 and Ser-1683. A Phosphothreonine modification is found at Thr-1780. A Phosphoserine modification is found at Ser-1784. The segment at 1812–1836 (ASEAVSEIQGPCSENHSPAEDPGLS) is disordered. Ser-1842 bears the Phosphoserine mark. The tract at residues 1882–2419 (DAFVAADSEK…RWRSPAHENS (538 aa)) is interaction with condensed chromosomes in telophase. 2 disordered regions span residues 1890–1914 (EKST…ECEA) and 1929–1983 (FNSG…AQMS). Ser-1931, Ser-2094, Ser-2109, Ser-2121, Ser-2125, Ser-2144, Ser-2153, Ser-2208, Ser-2287, Ser-2341, Ser-2413, and Ser-2419 each carry phosphoserine. The segment at 2119–2394 (VWSPLASPST…TGSQLFEMHE (276 aa)) is interaction with ERCC6. The interval 2182-2212 (SPIIKSVKTSPTSHSKHNTTSAKGFLSPGSQ) is disordered. Residues 2189–2212 (KTSPTSHSKHNTTSAKGFLSPGSQ) are compositionally biased toward polar residues.

The protein belongs to the RIF1 family. As to quaternary structure, interacts with TP53BP1 (when phosphorylated by ATM). May interact with TRF2. Interacts with SHLD2. Interacts with ERCC6 (via WHD region). Interacts with ASTE1. As to expression, expressed in Sertoli cells, prospermatagonia, early primary spermatocytes, and in oocytes at all stages of their growth. Expressed in embryonic stem (ES) and embryonic germ (EG) cells: expression is lost upon differentiation.

The protein resides in the nucleus. The protein localises to the chromosome. It localises to the telomere. Its subcellular location is the cytoplasm. It is found in the cytoskeleton. The protein resides in the spindle. Functionally, key regulator of TP53BP1 that plays a key role in the repair of double-strand DNA breaks (DSBs) in response to DNA damage: acts by promoting non-homologous end joining (NHEJ)-mediated repair of DSBs. In response to DNA damage, interacts with ATM-phosphorylated TP53BP1. Interaction with TP53BP1 leads to dissociate the interaction between NUDT16L1/TIRR and TP53BP1, thereby unmasking the tandem Tudor-like domain of TP53BP1 and allowing recruitment to DNA DSBs. Once recruited to DSBs, RIF1 and TP53BP1 act by promoting NHEJ-mediated repair of DSBs. In the same time, RIF1 and TP53BP1 specifically counteract the function of BRCA1 by blocking DSBs resection via homologous recombination (HR) during G1 phase. Also required for immunoglobulin class-switch recombination (CSR) during antibody genesis, a process that involves the generation of DNA DSBs. Promotes NHEJ of dysfunctional telomeres. The chain is Telomere-associated protein RIF1 from Mus musculus (Mouse).